The primary structure comprises 282 residues: MVPKFYKLSNGFKIPSIALGTYDIPRSQTAEIVYEGVKCGYRHFDTAVLYGNEKEVGDGIIKWLNEDPGNHKREEIFYTTKLWNSQNGYKRAKAAIRQCLNEVSGLQYIDLLLIHSPLEGSKLRLETWRAMQEAVDEGLVKSIGVSNYGKKHIDELLNWPELKHKPVVNQIEISPWIMRQELADYCKSKGLVVEAFAPLCHGYKMTNPDLLKVCKEVDRNPGQVLIRWSLQHGYLPLPKTKTVKRLEGNLAAYNFELSDEQMKFLDHPDAYEPTDWECTDAP.

The Proton donor role is filled by Tyr50. His115 provides a ligand contact to substrate.

Belongs to the aldo/keto reductase family.

This is an uncharacterized protein from Saccharomyces cerevisiae (strain ATCC 204508 / S288c) (Baker's yeast).